The chain runs to 441 residues: Mitochondrial distribution and morphology protein 12 (441 aa).

The region spanning 1–441 is the SMP-LTD domain; the sequence is MSIDIDWERA…VYPSFWTFLV (441 aa). Positions 180–289 are disordered; that stretch reads TPLRAVTRGN…SGTPPRRMRE (110 aa). Composition is skewed to polar residues over residues 226–245 and 253–263; these read SRPSTANTGNTLFSRGSVST and SSQTVLANNPG.

This sequence belongs to the MDM12 family. In terms of assembly, component of the ER-mitochondria encounter structure (ERMES) or MDM complex, composed of MMM1, MDM10, MDM12 and MDM34. An MMM1 homodimer associates with one molecule of MDM12 on each side in a pairwise head-to-tail manner, and the SMP-LTD domains of MMM1 and MDM12 generate a continuous hydrophobic tunnel for phospholipid trafficking.

Its subcellular location is the mitochondrion outer membrane. The protein resides in the endoplasmic reticulum membrane. Functionally, component of the ERMES/MDM complex, which serves as a molecular tether to connect the endoplasmic reticulum (ER) and mitochondria. Components of this complex are involved in the control of mitochondrial shape and protein biogenesis, and function in nonvesicular lipid trafficking between the ER and mitochondria. MDM12 is required for the interaction of the ER-resident membrane protein MMM1 and the outer mitochondrial membrane-resident beta-barrel protein MDM10. The MDM12-MMM1 subcomplex functions in the major beta-barrel assembly pathway that is responsible for biogenesis of all mitochondrial outer membrane beta-barrel proteins, and acts in a late step after the SAM complex. The MDM10-MDM12-MMM1 subcomplex further acts in the TOM40-specific pathway after the action of the MDM12-MMM1 complex. Essential for establishing and maintaining the structure of mitochondria and maintenance of mtDNA nucleoids. The protein is Mitochondrial distribution and morphology protein 12 of Paracoccidioides brasiliensis (strain Pb18).